The chain runs to 187 residues: Photosystem I assembly protein Ycf4 (187 aa).

2 consecutive transmembrane segments (helical) span residues 21 to 43 and 69 to 91; these read LSNY…AGIS and LLYG…WNVG.

This sequence belongs to the Ycf4 family.

It is found in the plastid. Its subcellular location is the cyanelle thylakoid membrane. Functionally, seems to be required for the assembly of the photosystem I complex. In Cyanophora paradoxa, this protein is Photosystem I assembly protein Ycf4.